We begin with the raw amino-acid sequence, 221 residues long: MTVVKASVHGDPNIGAWIAASEEYAVVAPKVPDDIVERVKEALDVEVVRTTVAGSNLVGALLAVNSNGALFPRHAREHEIRVVRELGVEVDVLPSKMNAVGNLVLTNDHGALVHPDLDDHALEVIESVLGGRVVRGELGGVKTVGSAGVANSKGAVVHPGATEEEMERVSEVLGVDVEVGTVNRGSPYVGVGIVVNSKGAVVGEDTTGPELARLEDALYLI.

Belongs to the eIF-6 family.

Binds to the 50S ribosomal subunit and prevents its association with the 30S ribosomal subunit to form the 70S initiation complex. The sequence is that of Translation initiation factor 6 from Methanopyrus kandleri (strain AV19 / DSM 6324 / JCM 9639 / NBRC 100938).